Reading from the N-terminus, the 844-residue chain is Translation initiation factor IF-2 (844 aa).

Residues 120-132 (RNSVNLVQPQQEK) are compositionally biased toward polar residues. The segment at 120–220 (RNSVNLVQPQ…SGKGFKKANP (101 aa)) is disordered. Over residues 161 to 175 (DEEKSSEDKSTESKN) the composition is skewed to basic and acidic residues. Residues 205 to 219 (SKAKKASGKGFKKAN) show a composition bias toward basic residues. The region spanning 343–510 (SRAPVVTIMG…AVLLQSEVLE (168 aa)) is the tr-type G domain. The interval 352–359 (GHVDHGKT) is G1. Residue 352 to 359 (GHVDHGKT) coordinates GTP. Residues 377 to 381 (GITQH) form a G2 region. Positions 398 to 401 (DTPG) are G3. Residues 398–402 (DTPGH) and 452–455 (NKID) each bind GTP. The G4 stretch occupies residues 452-455 (NKID). Residues 488 to 490 (SAK) form a G5 region.

It belongs to the TRAFAC class translation factor GTPase superfamily. Classic translation factor GTPase family. IF-2 subfamily.

It is found in the cytoplasm. In terms of biological role, one of the essential components for the initiation of protein synthesis. Protects formylmethionyl-tRNA from spontaneous hydrolysis and promotes its binding to the 30S ribosomal subunits. Also involved in the hydrolysis of GTP during the formation of the 70S ribosomal complex. The protein is Translation initiation factor IF-2 of Francisella philomiragia subsp. philomiragia (strain ATCC 25017 / CCUG 19701 / FSC 153 / O#319-036).